Here is a 127-residue protein sequence, read N- to C-terminus: Glycine cleavage system H protein (127 aa).

Positions Thr-24–Lys-105 constitute a Lipoyl-binding domain. Lys-65 is modified (N6-lipoyllysine).

Belongs to the GcvH family. In terms of assembly, the glycine cleavage system is composed of four proteins: P, T, L and H. (R)-lipoate is required as a cofactor.

In terms of biological role, the glycine cleavage system catalyzes the degradation of glycine. The H protein shuttles the methylamine group of glycine from the P protein to the T protein. This chain is Glycine cleavage system H protein, found in Pelodictyon phaeoclathratiforme (strain DSM 5477 / BU-1).